The primary structure comprises 396 residues: S-adenosylmethionine synthase (396 aa).

H15 is an ATP binding site. D17 is a Mg(2+) binding site. A K(+)-binding site is contributed by E43. Positions 56 and 99 each coordinate L-methionine. The flexible loop stretch occupies residues 99–109 (QSPDIALGVNR). ATP contacts are provided by residues 175–177 (DGK), 241–242 (RF), D250, 256–257 (RK), A273, and K277. D250 is an L-methionine binding site. K281 is an L-methionine binding site.

It belongs to the AdoMet synthase family. As to quaternary structure, homotetramer; dimer of dimers. It depends on Mg(2+) as a cofactor. Requires K(+) as cofactor.

It localises to the cytoplasm. It carries out the reaction L-methionine + ATP + H2O = S-adenosyl-L-methionine + phosphate + diphosphate. It functions in the pathway amino-acid biosynthesis; S-adenosyl-L-methionine biosynthesis; S-adenosyl-L-methionine from L-methionine: step 1/1. Its function is as follows. Catalyzes the formation of S-adenosylmethionine (AdoMet) from methionine and ATP. The overall synthetic reaction is composed of two sequential steps, AdoMet formation and the subsequent tripolyphosphate hydrolysis which occurs prior to release of AdoMet from the enzyme. This Carboxydothermus hydrogenoformans (strain ATCC BAA-161 / DSM 6008 / Z-2901) protein is S-adenosylmethionine synthase.